A 260-amino-acid chain; its full sequence is Ribonuclease 3 (260 aa).

Residues 1 to 24 (MAQSSKYQRKPRSGERKRSQRRLE) form a disordered region. A compositionally biased stretch (basic and acidic residues) spans 12-24 (RSGERKRSQRRLE). One can recognise an RNase III domain in the interval 33–162 (FDDLLVRTGL…FIGALYMDQG (130 aa)). E75 provides a ligand contact to Mg(2+). D79 is a catalytic residue. Mg(2+) is bound by residues D148 and E151. E151 is an active-site residue. One can recognise a DRBM domain in the interval 188-257 (DFKSQLQEFV…AKQALLALNQ (70 aa)).

This sequence belongs to the ribonuclease III family. In terms of assembly, homodimer. Requires Mg(2+) as cofactor.

The protein localises to the cytoplasm. It catalyses the reaction Endonucleolytic cleavage to 5'-phosphomonoester.. Functionally, digests double-stranded RNA. Involved in the processing of primary rRNA transcript to yield the immediate precursors to the large and small rRNAs (23S and 16S). Processes some mRNAs, and tRNAs when they are encoded in the rRNA operon. Processes pre-crRNA and tracrRNA of type II CRISPR loci if present in the organism. The protein is Ribonuclease 3 of Shouchella clausii (strain KSM-K16) (Alkalihalobacillus clausii).